Consider the following 126-residue polypeptide: Large ribosomal subunit protein bL21 (126 aa).

The segment at 105 to 126 (KKPSVGPRAKRTKAAPAAEAAE) is disordered.

In terms of assembly, contacts protein L20. Part of the 50S ribosomal subunit.

In terms of biological role, this protein binds to 23S rRNA in the presence of protein L20. This chain is Large ribosomal subunit protein bL21, found in Rhodopseudomonas palustris (strain ATCC BAA-98 / CGA009).